A 122-amino-acid chain; its full sequence is Large ribosomal subunit protein uL14c (122 aa).

Belongs to the universal ribosomal protein uL14 family. Part of the 50S ribosomal subunit.

It localises to the plastid. The protein resides in the chloroplast. Binds to 23S rRNA. The protein is Large ribosomal subunit protein uL14c of Oltmannsiellopsis viridis (Marine flagellate).